Reading from the N-terminus, the 143-residue chain is Large ribosomal subunit protein uL22c (143 aa).

It belongs to the universal ribosomal protein uL22 family. Part of the 50S ribosomal subunit.

It localises to the plastid. It is found in the chloroplast. This protein binds specifically to 23S rRNA. Its function is as follows. The globular domain of the protein is located near the polypeptide exit tunnel on the outside of the subunit, while an extended beta-hairpin is found that lines the wall of the exit tunnel in the center of the 70S ribosome. The polypeptide is Large ribosomal subunit protein uL22c (rpl22) (Piper cenocladum (Ant piper)).